Reading from the N-terminus, the 388-residue chain is Chorismate synthase (388 aa).

NADP(+) contacts are provided by Arg-39 and Arg-45. Residues 130 to 132 (RSS), 251 to 252 (NA), Gly-296, 311 to 315 (KPIPT), and Arg-337 contribute to the FMN site.

Belongs to the chorismate synthase family. Homotetramer. FMNH2 is required as a cofactor.

The enzyme catalyses 5-O-(1-carboxyvinyl)-3-phosphoshikimate = chorismate + phosphate. The protein operates within metabolic intermediate biosynthesis; chorismate biosynthesis; chorismate from D-erythrose 4-phosphate and phosphoenolpyruvate: step 7/7. Functionally, catalyzes the anti-1,4-elimination of the C-3 phosphate and the C-6 proR hydrogen from 5-enolpyruvylshikimate-3-phosphate (EPSP) to yield chorismate, which is the branch point compound that serves as the starting substrate for the three terminal pathways of aromatic amino acid biosynthesis. This reaction introduces a second double bond into the aromatic ring system. The chain is Chorismate synthase from Geobacillus thermodenitrificans (strain NG80-2).